Here is a 290-residue protein sequence, read N- to C-terminus: Light-independent protochlorophyllide reductase iron-sulfur ATP-binding protein (290 aa).

ATP contacts are provided by residues 10-15 (GIGKST) and Lys39. Ser14 lines the Mg(2+) pocket. Cys95 and Cys129 together coordinate [4Fe-4S] cluster. 180–181 (NR) lines the ATP pocket.

The protein belongs to the NifH/BchL/ChlL family. As to quaternary structure, homodimer. Protochlorophyllide reductase is composed of three subunits; ChlL, ChlN and ChlB. The cofactor is [4Fe-4S] cluster.

The protein resides in the plastid. The protein localises to the chloroplast. It carries out the reaction chlorophyllide a + oxidized 2[4Fe-4S]-[ferredoxin] + 2 ADP + 2 phosphate = protochlorophyllide a + reduced 2[4Fe-4S]-[ferredoxin] + 2 ATP + 2 H2O. The protein operates within porphyrin-containing compound metabolism; chlorophyll biosynthesis (light-independent). In terms of biological role, component of the dark-operative protochlorophyllide reductase (DPOR) that uses Mg-ATP and reduced ferredoxin to reduce ring D of protochlorophyllide (Pchlide) to form chlorophyllide a (Chlide). This reaction is light-independent. The L component serves as a unique electron donor to the NB-component of the complex, and binds Mg-ATP. This Angiopteris evecta (Mule's foot fern) protein is Light-independent protochlorophyllide reductase iron-sulfur ATP-binding protein.